A 599-amino-acid polypeptide reads, in one-letter code: Histone-arginine methyltransferase CARMER (599 aa).

Residues 127-434 (ASQYFQFYGY…QRQSYDVEID (308 aa)) enclose the SAM-dependent MTase PRMT-type domain. S-adenosyl-L-methionine contacts are provided by Q140, R149, G173, E195, E224, and T252. R487 is modified (asymmetric dimethylarginine; by autocatalysis).

This sequence belongs to the class I-like SAM-binding methyltransferase superfamily. Protein arginine N-methyltransferase family. Homodimer. In terms of processing, the dimethylated protein is the major form.

The protein resides in the cytoplasm. It localises to the nucleus. The catalysed reaction is L-arginyl-[protein] + 2 S-adenosyl-L-methionine = N(omega),N(omega)-dimethyl-L-arginyl-[protein] + 2 S-adenosyl-L-homocysteine + 2 H(+). In terms of biological role, methylates (mono- and asymmetric dimethylation) the guanidino nitrogens of arginyl residues in proteins. May methylate histone H3 at 'Arg-17' and activate transcription via chromatin remodeling. This chain is Histone-arginine methyltransferase CARMER (Art4), found in Culex quinquefasciatus (Southern house mosquito).